The primary structure comprises 235 residues: Ubiquitin-like-conjugating enzyme ATG10 (235 aa).

The Glycyl thioester intermediate role is filled by C196.

The protein belongs to the ATG10 family. In terms of assembly, forms homooligomers. Interacts with ATG7 and ATG12.

It localises to the preautophagosomal structure membrane. Its function is as follows. E2-like enzyme required for the cytoplasm to vacuole transport (Cvt), autophagy and nucleophagy. Acts as an E2-like enzyme that catalyzes the conjugation of ATG12 to ATG5. ATG12 conjugation to ATG5 is required for proper localization of ATG8 to the preautophagosomal structure (PAS). Likely serves as an ATG5-recognition molecule. Autophagy is required for proper vegetative growth, asexual/sexual reproduction, and full virulence. Autophagy is particularly involved in the biosynthesis of deoxynivalenol (DON), an important virulence determinant. The sequence is that of Ubiquitin-like-conjugating enzyme ATG10 from Gibberella zeae (strain ATCC MYA-4620 / CBS 123657 / FGSC 9075 / NRRL 31084 / PH-1) (Wheat head blight fungus).